A 72-amino-acid chain; its full sequence is UPF0352 protein NTHI1007 (72 aa).

Belongs to the UPF0352 family.

This Haemophilus influenzae (strain 86-028NP) protein is UPF0352 protein NTHI1007.